Here is a 285-residue protein sequence, read N- to C-terminus: MTANFGAIAPERGNSPQLRWINVVFFGVFHALALLSPWFFSWSALGLLVFLHWLFGSIGICLGYHRLLSHKSFQVPKWLEYAIALIGALALQGGPIFWVGGHRQHHAHTEDIDLDPYSAQKGFWWSHILWIFYPRPEFFDYDTYKKYAPDLARQPFYCWLDRYFLLLQIPFALLLYVLGGWPFVFYGVFLRCVLLWHSTWFVNSASHLWGYRTFDADDGARNLWWVSIVTYGEGWHNNHHTYPHMAKSGLFWWEIDVTWWSIQLLQTLGLAKKVVSSPPQGATHG.

The next 2 helical transmembrane spans lie at tryptophan 20–phenylalanine 40 and alanine 44–tyrosine 64. The Histidine box-1 motif lies at histidine 65 to histidine 70. Residues tyrosine 81–glycine 101 form a helical membrane-spanning segment. Residues histidine 102–histidine 106 carry the Histidine box-2 motif. A helical membrane pass occupies residues isoleucine 169–phenylalanine 189. The Histidine box-3 signature appears at histidine 239–proline 243.

Belongs to the fatty acid desaturase type 2 family. Fe(2+) serves as cofactor.

The protein resides in the membrane. It catalyses the reaction a 1-acyl-2-hexadecanoyl-glycerolipid + 2 reduced [2Fe-2S]-[ferredoxin] + O2 + 2 H(+) = a 1-acyl-2-[(9Z)-hexadecenoyl]-glycerolipid + 2 oxidized [2Fe-2S]-[ferredoxin] + 2 H2O. Its pathway is lipid metabolism; fatty acid biosynthesis. Desaturase involved in fatty acid biosynthesis. Introduces a double bond at carbon 9 of palmitoyl groups (16:0) attached to the sn-2 position of the glycerol moiety of membrane glycerolipids. The protein is sn-2 palmitoyl-lipid 9-desaturase of Nostoc sp. (strain 36).